A 100-amino-acid chain; its full sequence is Small ribosomal subunit protein uS14c (100 aa).

Residues 1-31 (MARKSLIQREKKRQKLEQKYHSIRRSSKKEI) are disordered.

It belongs to the universal ribosomal protein uS14 family. As to quaternary structure, part of the 30S ribosomal subunit.

It is found in the plastid. The protein resides in the chloroplast. Functionally, binds 16S rRNA, required for the assembly of 30S particles. In Nicotiana tomentosiformis (Tobacco), this protein is Small ribosomal subunit protein uS14c.